A 212-amino-acid chain; its full sequence is Glutathione S-transferase hmp2 (212 aa).

Residues 1 to 80 (MVIKLYGSAM…YLARKYDSGT (80 aa)) form the GST N-terminal domain. Glutathione is bound by residues 51–52 (KV) and 64–65 (ES). A GST C-terminal domain is found at 88–212 (DHEAYGRFEQ…TWIKATAEAR (125 aa)).

It belongs to the GST superfamily.

It catalyses the reaction RX + glutathione = an S-substituted glutathione + a halide anion + H(+). The protein operates within secondary metabolite biosynthesis. Functionally, glutathione S-transferase; part of the gene cluster that mediates the biosynthesis of hypothemycin, a resorcylic acid lactone (RAL) that irreversibly inhibits a subset of protein kinases with a conserved cysteine in the ATP binding site such as human ERK2. The first step is performed by both PKSs hmp3 and hmp8 and leads to the production of 7',8'-dehydrozearalenol (DHZ). The highly reducing PKS hpm8 synthesizes the reduced hexaketide (7S,11S,2E,8E)-7,11-dihydroxy-dodeca-2,8-dienoate, which is transferred downstream to the non-reducing PKS hpm3. Hpm3 then extends the reduced hexaketide to a nonaketide, after which regioselective cyclization and macrolactonization affords DHZ. The next step is the conversion of DHZ into aigialomycin C and is performed by the O-methyltransferase hmp5, the FAD-binding monooxygenase hmp7, and the cytochrome P450 monooxygenase hmp1. The wide substrate tolerance of the hmp5 and hmp7 implies that the reactions from DHZ to aigialomycin C can occur in any order. The steps from aigialomycin C to hypothemycin are less well established. The FAD-linked oxidoreductase hmp9 presumably catalyzes oxidation of the C-6' hydroxyl to a ketone. The timing of this oxidation is important, since the resulting enone functional group is a Michael acceptor that can react spontaneously with glutathione, an abundant metabolite in fungal cells. The glutathione S-transferase hmp2 catalyzes cis-trans isomerization of the 7',8' double bond with equilibrium favoring the trans isomer. The hpm6-encoded transporter might preferentially pump hypothemycin out of the cell relative to the trans isomer aigialomycin A. The cis-to-trans isomerization may be coupled with C-4' hydroxylation, since all known hypothemycin analogs containing the enone functional group also have hydroxyl groups at both C-4' and C-5'. The sequence is that of Glutathione S-transferase hmp2 from Hypomyces subiculosus (Nectria subiculosa).